A 760-amino-acid polypeptide reads, in one-letter code: Alpha-amylase (760 aa).

The N-terminal stretch at 1 to 34 (MSKRSKLLKRRMLSLSVICVLIGYGPVFNPVRSQ) is a signal peptide. Positions 143, 184, and 192 each coordinate Ca(2+). The Nucleophile role is filled by D222. A Ca(2+)-binding site is contributed by H226. E262 functions as the Proton donor in the catalytic mechanism.

The protein belongs to the glycosyl hydrolase 13 family. Monomer. Requires Ca(2+) as cofactor.

It catalyses the reaction Endohydrolysis of (1-&gt;4)-alpha-D-glucosidic linkages in polysaccharides containing three or more (1-&gt;4)-alpha-linked D-glucose units.. This chain is Alpha-amylase (amyA), found in Clostridium acetobutylicum (strain ATCC 824 / DSM 792 / JCM 1419 / IAM 19013 / LMG 5710 / NBRC 13948 / NRRL B-527 / VKM B-1787 / 2291 / W).